The chain runs to 892 residues: Alanine--tRNA ligase (892 aa).

Residues histidine 580, histidine 584, cysteine 682, and histidine 686 each contribute to the Zn(2+) site.

Belongs to the class-II aminoacyl-tRNA synthetase family. It depends on Zn(2+) as a cofactor.

Its subcellular location is the cytoplasm. It carries out the reaction tRNA(Ala) + L-alanine + ATP = L-alanyl-tRNA(Ala) + AMP + diphosphate. Functionally, catalyzes the attachment of alanine to tRNA(Ala) in a two-step reaction: alanine is first activated by ATP to form Ala-AMP and then transferred to the acceptor end of tRNA(Ala). Also edits incorrectly charged Ser-tRNA(Ala) and Gly-tRNA(Ala) via its editing domain. This chain is Alanine--tRNA ligase, found in Salinispora tropica (strain ATCC BAA-916 / DSM 44818 / JCM 13857 / NBRC 105044 / CNB-440).